Here is a 596-residue protein sequence, read N- to C-terminus: Potassium-transporting ATPase potassium-binding subunit (596 aa).

Transmembrane regions (helical) follow at residues 6-26, 67-87, 136-156, 177-197, 283-303, 314-334, 413-433, 450-470, 518-538, and 560-580; these read ILTI…LGGF, AIGL…LQLF, GLTT…IALI, ITLY…VGQG, LSNF…CFTF, WVVL…AVHF, GLYG…LMIG, MVAI…AIAV, MLAI…LALA, and LFIV…YVPA.

This sequence belongs to the KdpA family. In terms of assembly, the system is composed of three essential subunits: KdpA, KdpB and KdpC.

It localises to the cell inner membrane. Its function is as follows. Part of the high-affinity ATP-driven potassium transport (or Kdp) system, which catalyzes the hydrolysis of ATP coupled with the electrogenic transport of potassium into the cytoplasm. This subunit binds the periplasmic potassium ions and delivers the ions to the membrane domain of KdpB through an intramembrane tunnel. In Polynucleobacter asymbioticus (strain DSM 18221 / CIP 109841 / QLW-P1DMWA-1) (Polynucleobacter necessarius subsp. asymbioticus), this protein is Potassium-transporting ATPase potassium-binding subunit.